A 520-amino-acid chain; its full sequence is MGRFSSLCALTAVIHSFGRVSAAIGPVTDLTISNGDVSPDGFTRAAVLANGVFPGPLITGNKGDNFQINVIDNLSNETMLKSTSIHWHGFFQKGTNWADGAAFVNQCPIATGNSFLYDFTATDQAGTFWYHSHLSTQYCDGLRGPMVVYDPSDPHADLYDVDDETTIITLSDWYHTAASLGAAFPIGSDSTLINGLGRFAGGDSTDLAVITVEQGKRYRMRLLSLSCDPNYVFSIDGHNMTIIEADAVNHEPLTVDSIQIYAGQRYSFVLTADQDIDNYFIRALPSAGTTSFDGGINSAILRYSGASEVDPTTTETTSVLPLDEANLVPLDSPAAPGDPNIGGVDYALNLDFNFDGTNFFINDVSFVSPTVPVLLQILSGTTSAADLLPSGSLFAVPSNSTIEISFPITATNAPGAPHPFHLHGHTFSIVRTAGSTDTNFVNPVRRDVVNTGTVGDNVTIRFTTDNPGPWFLHCHIDFHLEAGFAIVFSEDTADVSNTTTPSTAWEDLCPTYNALDSSDL.

The N-terminal stretch at 1–18 (MGRFSSLCALTAVIHSFG) is a signal peptide. 3 Plastocyanin-like domains span residues 24–149 (IGPV…MVVY), 161–303 (VDDE…ILRY), and 370–491 (TVPV…FSED). N-linked (GlcNAc...) asparagine glycosylation is found at N73 and N76. H86, H88, H131, and H133 together coordinate Cu cation. 2 disulfides stabilise this stretch: C107–C509 and C139–C227. Residues N239 and N399 are each glycosylated (N-linked (GlcNAc...) asparagine). Positions 418, 421, 423, 473, 474, 475, and 479 each coordinate Cu cation. N497 carries N-linked (GlcNAc...) asparagine glycosylation.

This sequence belongs to the multicopper oxidase family. In terms of assembly, homodimer. Requires Cu cation as cofactor.

Its subcellular location is the secreted. The catalysed reaction is 4 hydroquinone + O2 = 4 benzosemiquinone + 2 H2O. In terms of biological role, lignin degradation and detoxification of lignin-derived products. The chain is Laccase-4 (LCC4) from Trametes villosa (White-rot fungus).